We begin with the raw amino-acid sequence, 546 residues long: Probable protein kinase UbiB (546 aa).

Residues 124-502 form the Protein kinase domain; that stretch reads DFDIQPLASA…HVRQSQSRYL (379 aa). ATP is bound by residues 130–138 and Lys-153; that span reads LASASIAQV. Asp-288 acts as the Proton acceptor in catalysis. The next 2 membrane-spanning stretches (helical) occupy residues 501-521 and 522-542; these read YLLGIGATLLLSGSFLLVNRP and EWGLMPGWLMVGGVVVWLVGW.

It belongs to the ABC1 family. UbiB subfamily.

It is found in the cell inner membrane. It functions in the pathway cofactor biosynthesis; ubiquinone biosynthesis [regulation]. Functionally, is probably a protein kinase regulator of UbiI activity which is involved in aerobic coenzyme Q (ubiquinone) biosynthesis. The sequence is that of Probable protein kinase UbiB from Salmonella agona (strain SL483).